Consider the following 468-residue polypeptide: Glutamate--tRNA ligase 2 (468 aa).

Positions 13-23 (PSPTGYLHIGG) match the 'HIGH' region motif. The short motif at 241–245 (KLSKR) is the 'KMSKS' region element. Lys244 contacts ATP.

It belongs to the class-I aminoacyl-tRNA synthetase family. Glutamate--tRNA ligase type 1 subfamily. As to quaternary structure, monomer.

It localises to the cytoplasm. The enzyme catalyses tRNA(Glu) + L-glutamate + ATP = L-glutamyl-tRNA(Glu) + AMP + diphosphate. Catalyzes the attachment of glutamate to tRNA(Glu) in a two-step reaction: glutamate is first activated by ATP to form Glu-AMP and then transferred to the acceptor end of tRNA(Glu). The chain is Glutamate--tRNA ligase 2 from Paracoccus denitrificans (strain Pd 1222).